A 453-amino-acid chain; its full sequence is Tryptophan biosynthesis protein TrpCF (453 aa).

The tract at residues M1–E257 is indole-3-glycerol phosphate synthase. The segment at N258 to Y453 is N-(5'-phosphoribosyl)anthranilate isomerase.

In the N-terminal section; belongs to the TrpC family. It in the C-terminal section; belongs to the TrpF family.

It catalyses the reaction N-(5-phospho-beta-D-ribosyl)anthranilate = 1-(2-carboxyphenylamino)-1-deoxy-D-ribulose 5-phosphate. The catalysed reaction is 1-(2-carboxyphenylamino)-1-deoxy-D-ribulose 5-phosphate + H(+) = (1S,2R)-1-C-(indol-3-yl)glycerol 3-phosphate + CO2 + H2O. It participates in amino-acid biosynthesis; L-tryptophan biosynthesis; L-tryptophan from chorismate: step 3/5. It functions in the pathway amino-acid biosynthesis; L-tryptophan biosynthesis; L-tryptophan from chorismate: step 4/5. Its function is as follows. Bifunctional enzyme that catalyzes two sequential steps of tryptophan biosynthetic pathway. The first reaction is catalyzed by the isomerase, coded by the TrpF domain; the second reaction is catalyzed by the synthase, coded by the TrpC domain. The sequence is that of Tryptophan biosynthesis protein TrpCF (trpC) from Buchnera aphidicola subsp. Diuraphis noxia.